Consider the following 962-residue polypeptide: Glycine dehydrogenase (decarboxylating) (962 aa).

Lys709 carries the post-translational modification N6-(pyridoxal phosphate)lysine.

This sequence belongs to the GcvP family. The glycine cleavage system is composed of four proteins: P, T, L and H. Pyridoxal 5'-phosphate is required as a cofactor.

The catalysed reaction is N(6)-[(R)-lipoyl]-L-lysyl-[glycine-cleavage complex H protein] + glycine + H(+) = N(6)-[(R)-S(8)-aminomethyldihydrolipoyl]-L-lysyl-[glycine-cleavage complex H protein] + CO2. Its function is as follows. The glycine cleavage system catalyzes the degradation of glycine. The P protein binds the alpha-amino group of glycine through its pyridoxal phosphate cofactor; CO(2) is released and the remaining methylamine moiety is then transferred to the lipoamide cofactor of the H protein. This chain is Glycine dehydrogenase (decarboxylating), found in Shewanella baltica (strain OS155 / ATCC BAA-1091).